The chain runs to 323 residues: MSQLPPAIFLMGPTAAGKTDLAIELTKVLPCELISVDSALVYRGMDIGTAKPSKELLAEFPHRLIDILDPAEAYSAADFRRDALEAMAEITARGKIPLLVGGTMLYYKALIEGLADMPAADPEVRAQIEEEAARLGWQALHDQLAAIDPESAARIHPNDPQRLSRALEVYRVSGQSMTELRLKQSVQSTEAAASGLQQLPYTVANLAIAPTNRQVLHERIKQRFTNMLEQGFIDEVVALRNRSDLHAGLPSIRAVGYRQVWDFLDGKLTSAEMQERGIIATRQLAKRQFTWLRSWKDLHWLDSLDCDNLPRALKYLGTISILS.

Gly12–Thr19 contacts ATP. Thr14–Thr19 contributes to the substrate binding site. Interaction with substrate tRNA regions lie at residues Asp37–Leu40 and Gln161–Arg165.

The protein belongs to the IPP transferase family. Monomer. The cofactor is Mg(2+).

It catalyses the reaction adenosine(37) in tRNA + dimethylallyl diphosphate = N(6)-dimethylallyladenosine(37) in tRNA + diphosphate. Catalyzes the transfer of a dimethylallyl group onto the adenine at position 37 in tRNAs that read codons beginning with uridine, leading to the formation of N6-(dimethylallyl)adenosine (i(6)A). The chain is tRNA dimethylallyltransferase from Pseudomonas fluorescens (strain Pf0-1).